Here is an 889-residue protein sequence, read N- to C-terminus: Translation initiation factor IF-2 (889 aa).

The disordered stretch occupies residues Met1 to Glu299. Low complexity predominate over residues Ile61–Arg76. A compositionally biased stretch (pro residues) spans Pro77 to His93. Basic and acidic residues predominate over residues Met116 to Glu182. Over residues Arg196–Ala215 the composition is skewed to low complexity. Positions Arg220–Arg231 are enriched in basic and acidic residues. A tr-type G domain is found at Ser387–Asp554. Residues Gly396–Thr403 are G1. Gly396–Thr403 is a GTP binding site. Residues Gly421–His425 are G2. The segment at Asp442 to Gly445 is G3. GTP is bound by residues Asp442–His446 and Asn496–Asp499. The segment at Asn496–Asp499 is G4. The G5 stretch occupies residues Ser532–Lys534.

The protein belongs to the TRAFAC class translation factor GTPase superfamily. Classic translation factor GTPase family. IF-2 subfamily.

Its subcellular location is the cytoplasm. Functionally, one of the essential components for the initiation of protein synthesis. Protects formylmethionyl-tRNA from spontaneous hydrolysis and promotes its binding to the 30S ribosomal subunits. Also involved in the hydrolysis of GTP during the formation of the 70S ribosomal complex. This chain is Translation initiation factor IF-2, found in Rhizobium meliloti (strain 1021) (Ensifer meliloti).